The following is a 281-amino-acid chain: 2-dehydro-3-deoxyphosphooctonate aldolase (281 aa).

It belongs to the KdsA family.

The protein resides in the cytoplasm. The catalysed reaction is D-arabinose 5-phosphate + phosphoenolpyruvate + H2O = 3-deoxy-alpha-D-manno-2-octulosonate-8-phosphate + phosphate. Its pathway is carbohydrate biosynthesis; 3-deoxy-D-manno-octulosonate biosynthesis; 3-deoxy-D-manno-octulosonate from D-ribulose 5-phosphate: step 2/3. It participates in bacterial outer membrane biogenesis; lipopolysaccharide biosynthesis. The sequence is that of 2-dehydro-3-deoxyphosphooctonate aldolase from Janthinobacterium sp. (strain Marseille) (Minibacterium massiliensis).